Consider the following 616-residue polypeptide: Telomeric repeat-binding factor 2-interacting protein 1 (616 aa).

In terms of domain architecture, BRCT spans 15–98 (FLDPGGQSMR…QQLDPNDYAI (84 aa)). A Myb-like domain is found at 112 to 169 (NQGSGRLGYSSEEDAAILKFIEKRQQDAKGNLVWKEMEKRHVTEHSWQSMKDRFLKHL). Residues 174–518 (ADKPTKKSPI…CSHIRETPEE (345 aa)) are disordered. Over residues 232–245 (PERASSPPEEPQAA) the composition is skewed to low complexity. The span at 246–255 (GQPSQASSND) shows a compositional bias: polar residues. Basic and acidic residues-rich tracts occupy residues 271–288 (ENPR…EHSS) and 344–358 (RSSR…RDIP). 2 stretches are compositionally biased toward polar residues: residues 363 to 382 (EQSS…SDSG) and 397 to 415 (NANS…ASTP). Residues 431–444 (EDSDVMDDSEECEN) are compositionally biased toward acidic residues. Over residues 468–480 (REPESQAEHHEET) the composition is skewed to basic and acidic residues. The Nuclear localization signal signature appears at 597–613 (SKFGEEEVTRRKSFLAT).

The protein belongs to the RAP1 family. As to quaternary structure, homodimer. Component of the shelterin complex (telosome). Interacts with terf2; the interaction is direct.

The protein localises to the nucleus. It localises to the chromosome. Its subcellular location is the telomere. In terms of biological role, acts both as a regulator of telomere function and as a transcription regulator. Involved in the regulation of telomere length and protection as a component of the shelterin complex (telosome). Does not bind DNA directly: recruited to telomeric double-stranded 5'-TTAGGG-3' repeats via its interaction with terf2. Independently of its function in telomeres, also acts as a transcription regulator: recruited to extratelomeric 5'-TTAGGG-3' sites via its association with terf2 or other factors, and regulates gene expression. In Danio rerio (Zebrafish), this protein is Telomeric repeat-binding factor 2-interacting protein 1 (terf2ip).